The chain runs to 90 residues: Cell division topological specificity factor (90 aa).

This sequence belongs to the MinE family.

Its function is as follows. Prevents the cell division inhibition by proteins MinC and MinD at internal division sites while permitting inhibition at polar sites. This ensures cell division at the proper site by restricting the formation of a division septum at the midpoint of the long axis of the cell. In Clostridium perfringens (strain SM101 / Type A), this protein is Cell division topological specificity factor.